Reading from the N-terminus, the 87-residue chain is Sec-independent protein translocase protein TatA (87 aa).

A helical membrane pass occupies residues 1–21 (MGGISIWQLLIIALIIVLLFG). The segment at 54–87 (NTEADADFEQKTLSKEEQQSEDPVQKSQKDKEQV) is disordered.

This sequence belongs to the TatA/E family. The Tat system comprises two distinct complexes: a TatABC complex, containing multiple copies of TatA, TatB and TatC subunits, and a separate TatA complex, containing only TatA subunits. Substrates initially bind to the TatABC complex, which probably triggers association of the separate TatA complex to form the active translocon.

Its subcellular location is the cell inner membrane. Part of the twin-arginine translocation (Tat) system that transports large folded proteins containing a characteristic twin-arginine motif in their signal peptide across membranes. TatA could form the protein-conducting channel of the Tat system. The polypeptide is Sec-independent protein translocase protein TatA (Photobacterium profundum (strain SS9)).